The primary structure comprises 312 residues: Zinc transporter ZitB (312 aa).

Transmembrane regions (helical) follow at residues 16 to 36, 40 to 60, 81 to 101, 117 to 137, 153 to 173, and 177 to 197; these read LLIA…GGWL, LALL…FIAL, LTTL…ILIV, TPML…FWIL, LHVL…IVIL, and WTPI…RSAW.

The protein belongs to the cation diffusion facilitator (CDF) transporter (TC 2.A.4) family. SLC30A subfamily.

The protein resides in the cell inner membrane. Involved in zinc efflux across the cytoplasmic membrane, thus reducing zinc accumulation in the cytoplasm and rendering bacteria more resistant to zinc. It may contribute to zinc homeostasis at low concentrations of zinc. This Yersinia pestis protein is Zinc transporter ZitB.